The following is a 122-amino-acid chain: Large ribosomal subunit protein uL14 (122 aa).

It belongs to the universal ribosomal protein uL14 family. In terms of assembly, part of the 50S ribosomal subunit. Forms a cluster with proteins L3 and L19. In the 70S ribosome, L14 and L19 interact and together make contacts with the 16S rRNA in bridges B5 and B8.

Functionally, binds to 23S rRNA. Forms part of two intersubunit bridges in the 70S ribosome. The protein is Large ribosomal subunit protein uL14 of Shewanella sp. (strain ANA-3).